Reading from the N-terminus, the 276-residue chain is Dermonecrotic toxin LspiSicTox-betaIE4ii (276 aa).

Residue His5 is part of the active site. The Mg(2+) site is built by Glu25 and Asp27. His41 functions as the Nucleophile in the catalytic mechanism. 2 disulfides stabilise this stretch: Cys45–Cys51 and Cys47–Cys189. Asp85 lines the Mg(2+) pocket.

This sequence belongs to the arthropod phospholipase D family. Class II subfamily. The cofactor is Mg(2+). As to expression, expressed by the venom gland.

It is found in the secreted. It carries out the reaction an N-(acyl)-sphingosylphosphocholine = an N-(acyl)-sphingosyl-1,3-cyclic phosphate + choline. The enzyme catalyses an N-(acyl)-sphingosylphosphoethanolamine = an N-(acyl)-sphingosyl-1,3-cyclic phosphate + ethanolamine. It catalyses the reaction a 1-acyl-sn-glycero-3-phosphocholine = a 1-acyl-sn-glycero-2,3-cyclic phosphate + choline. The catalysed reaction is a 1-acyl-sn-glycero-3-phosphoethanolamine = a 1-acyl-sn-glycero-2,3-cyclic phosphate + ethanolamine. Functionally, dermonecrotic toxins cleave the phosphodiester linkage between the phosphate and headgroup of certain phospholipids (sphingolipid and lysolipid substrates), forming an alcohol (often choline) and a cyclic phosphate. This toxin acts on sphingomyelin (SM). It may also act on ceramide phosphoethanolamine (CPE), lysophosphatidylcholine (LPC) and lysophosphatidylethanolamine (LPE), but not on lysophosphatidylserine (LPS), and lysophosphatidylglycerol (LPG). It acts by transphosphatidylation, releasing exclusively cyclic phosphate products as second products. Induces dermonecrosis, hemolysis, increased vascular permeability, edema, inflammatory response, and platelet aggregation. The sequence is that of Dermonecrotic toxin LspiSicTox-betaIE4ii from Loxosceles spinulosa (Recluse spider).